The following is a 197-amino-acid chain: MYEYIKGKYIDMYKDYIVIENNNIGYKIYTSGSTMAKLPSIGENIMLYTEQIVREDFIGVYGFLTKDELSMFKLLLTINGVGAKAALSLLSISNVSTLKYAIKMGDEKTITRAPGIGKKTAQRIILELKDKIEIDILEEDDEQTINKVTDDKKVLEAVAALITLGYSEKEANKVINSCDKNNSLEQIIKEALKYLMK.

The interval 1 to 64 is domain I; the sequence is MYEYIKGKYI…EDFIGVYGFL (64 aa). A domain II region spans residues 65–143; sequence TKDELSMFKL…IDILEEDDEQ (79 aa). Residues 144–148 form a flexible linker region; it reads TINKV. Residues 149-197 are domain III; that stretch reads TDDKKVLEAVAALITLGYSEKEANKVINSCDKNNSLEQIIKEALKYLMK.

It belongs to the RuvA family. Homotetramer. Forms an RuvA(8)-RuvB(12)-Holliday junction (HJ) complex. HJ DNA is sandwiched between 2 RuvA tetramers; dsDNA enters through RuvA and exits via RuvB. An RuvB hexamer assembles on each DNA strand where it exits the tetramer. Each RuvB hexamer is contacted by two RuvA subunits (via domain III) on 2 adjacent RuvB subunits; this complex drives branch migration. In the full resolvosome a probable DNA-RuvA(4)-RuvB(12)-RuvC(2) complex forms which resolves the HJ.

It is found in the cytoplasm. In terms of biological role, the RuvA-RuvB-RuvC complex processes Holliday junction (HJ) DNA during genetic recombination and DNA repair, while the RuvA-RuvB complex plays an important role in the rescue of blocked DNA replication forks via replication fork reversal (RFR). RuvA specifically binds to HJ cruciform DNA, conferring on it an open structure. The RuvB hexamer acts as an ATP-dependent pump, pulling dsDNA into and through the RuvAB complex. HJ branch migration allows RuvC to scan DNA until it finds its consensus sequence, where it cleaves and resolves the cruciform DNA. The polypeptide is Holliday junction branch migration complex subunit RuvA (Clostridium botulinum (strain 657 / Type Ba4)).